A 540-amino-acid polypeptide reads, in one-letter code: Esterase B1 (540 aa).

A disulfide bond links cysteine 68 and cysteine 81. Serine 191 functions as the Acyl-ester intermediate in the catalytic mechanism. Active-site charge relay system residues include glutamate 324 and histidine 442. A glycan (N-linked (GlcNAc...) asparagine) is linked at asparagine 452.

It belongs to the type-B carboxylesterase/lipase family.

It catalyses the reaction a carboxylic ester + H2O = an alcohol + a carboxylate + H(+). Functionally, overproduction of nonspecific esterases is a common mechanism of resistance to organophosphate insecticides. The polypeptide is Esterase B1 (B1) (Culex pipiens (House mosquito)).